A 459-amino-acid chain; its full sequence is tRNA modification GTPase MnmE (459 aa).

R30, E93, and K132 together coordinate (6S)-5-formyl-5,6,7,8-tetrahydrofolate. Residues 226–381 enclose the TrmE-type G domain; that stretch reads GVTMAIVGKP…LEEKILESVK (156 aa). Residue N236 participates in K(+) binding. GTP contacts are provided by residues 236–241, 255–261, and 280–283; these read NVGKST, TDIPGTT, and DTAG. Position 240 (S240) interacts with Mg(2+). Residues T255, I257, and T260 each contribute to the K(+) site. T261 lines the Mg(2+) pocket. (6S)-5-formyl-5,6,7,8-tetrahydrofolate is bound at residue K459.

The protein belongs to the TRAFAC class TrmE-Era-EngA-EngB-Septin-like GTPase superfamily. TrmE GTPase family. In terms of assembly, homodimer. Heterotetramer of two MnmE and two MnmG subunits. K(+) is required as a cofactor.

The protein localises to the cytoplasm. Its function is as follows. Exhibits a very high intrinsic GTPase hydrolysis rate. Involved in the addition of a carboxymethylaminomethyl (cmnm) group at the wobble position (U34) of certain tRNAs, forming tRNA-cmnm(5)s(2)U34. This is tRNA modification GTPase MnmE from Fervidobacterium nodosum (strain ATCC 35602 / DSM 5306 / Rt17-B1).